The following is a 199-amino-acid chain: Recombination protein RecR (199 aa).

The C4-type zinc-finger motif lies at 57 to 72 (CRQCRVLTEEPVCGLC). Residues 80-175 (SLLCVVEGPA…RTTRIAHGVP (96 aa)) enclose the Toprim domain.

It belongs to the RecR family.

Functionally, may play a role in DNA repair. It seems to be involved in an RecBC-independent recombinational process of DNA repair. It may act with RecF and RecO. In Alkalilimnicola ehrlichii (strain ATCC BAA-1101 / DSM 17681 / MLHE-1), this protein is Recombination protein RecR.